The following is a 91-amino-acid chain: UPF0250 protein HCH_05838 (91 aa).

The protein belongs to the UPF0250 family.

In Hahella chejuensis (strain KCTC 2396), this protein is UPF0250 protein HCH_05838.